Reading from the N-terminus, the 368-residue chain is Zinc finger protein 24 (368 aa).

A Glycyl lysine isopeptide (Lys-Gly) (interchain with G-Cter in SUMO2) cross-link involves residue K22. A Glycyl lysine isopeptide (Lys-Gly) (interchain with G-Cter in SUMO1); alternate cross-link involves residue K27. Residue K27 forms a Glycyl lysine isopeptide (Lys-Gly) (interchain with G-Cter in SUMO2); alternate linkage. The region spanning 52–134 (RQRFRQFGYQ…TVLEDLESEL (83 aa)) is the SCAN box domain. Phosphoserine occurs at positions 132 and 142. Glycyl lysine isopeptide (Lys-Gly) (interchain with G-Cter in SUMO2) cross-links involve residues K147, K177, and K236. A C2H2-type 1 zinc finger spans residues 251-273 (HICDECGKHFSQGSALILHQRIH). A necessary and sufficient for nuclear localization region spans residues 251–301 (HICDECGKHFSQGSALILHQRIHSGEKPYGCVECGKAFSRSSILVQHQRVH). Residue S274 is modified to Phosphoserine. Glycyl lysine isopeptide (Lys-Gly) (interchain with G-Cter in SUMO2) cross-links involve residues K277 and K286. C2H2-type zinc fingers lie at residues 279–301 (YGCV…QRVH), 307–329 (YKCL…QRIH), and 335–357 (YECV…XXXH). S292 bears the Phosphoserine mark. Residue Y335 is modified to Phosphotyrosine. Glycyl lysine isopeptide (Lys-Gly) (interchain with G-Cter in SUMO2) cross-links involve residues K361 and K367.

Belongs to the krueppel C2H2-type zinc-finger protein family. Post-translationally, sumoylated.

It is found in the nucleus. Transcription factor required for myelination of differentiated oligodendrocytes. Required for the conversion of oligodendrocytes from the premyelinating to the myelinating state. In the developing central nervous system (CNS), involved in the maintenance in the progenitor stage by promoting the cell cycle. Specifically binds to the 5'-TCAT-3' DNA sequence. Has transcription repressor activity in vitro. The sequence is that of Zinc finger protein 24 (ZNF24) from Pan paniscus (Pygmy chimpanzee).